The chain runs to 366 residues: Methylthioribose-1-phosphate isomerase (366 aa).

The Proton donor role is filled by Asp260.

It belongs to the eIF-2B alpha/beta/delta subunits family. MtnA subfamily.

The protein localises to the cytoplasm. Its subcellular location is the nucleus. The enzyme catalyses 5-(methylsulfanyl)-alpha-D-ribose 1-phosphate = 5-(methylsulfanyl)-D-ribulose 1-phosphate. The protein operates within amino-acid biosynthesis; L-methionine biosynthesis via salvage pathway; L-methionine from S-methyl-5-thio-alpha-D-ribose 1-phosphate: step 1/6. Its function is as follows. Catalyzes the interconversion of methylthioribose-1-phosphate (MTR-1-P) into methylthioribulose-1-phosphate (MTRu-1-P). The polypeptide is Methylthioribose-1-phosphate isomerase (Caenorhabditis elegans).